Reading from the N-terminus, the 325-residue chain is RNA ligase 1 (325 aa).

Mg(2+) serves as cofactor. Mn(2+) is required as a cofactor. Post-translationally, AMPylates itself (auto-AMPylation).

It catalyses the reaction ATP + (ribonucleotide)n-3'-hydroxyl + 5'-phospho-(ribonucleotide)m = (ribonucleotide)n+m + AMP + diphosphate.. Its function is as follows. Functions as an RNA ligase, in vitro. The ligation reaction entails three nucleotidyl transfer steps. In the first step, the RNA ligase reacts with ATP in the absence of nucleic acid to form a covalent ligase-AMP intermediate and release pyrophosphate. In step 2, the ligase-AMP binds to the nucleic acid and transfers the adenylate to the 5'-PO4 terminus to form an adenylylated intermediate. In step 3, the RNA ligase directs the attack of the 3'-OH on the 5'-phosphoanhydride linkage, resulting in a repaired 3'-5' phosphodiester and release of AMP. Exhibits selectivity for single-stranded RNA substrates and may not have nick-sealing activity on double-stranded DNA-RNA hybrids. May play a role in maintaining RNA integrity under stress conditions, for example in response to reactive oxygen species (ROS). This chain is RNA ligase 1, found in Danio rerio (Zebrafish).